Reading from the N-terminus, the 75-residue chain is UPF0154 protein MYPE400 (75 aa).

Residues 5-27 (IGLCLGLGIPISLIIGAVIGYYF) form a helical membrane-spanning segment.

Belongs to the UPF0154 family.

The protein localises to the membrane. The protein is UPF0154 protein MYPE400 of Malacoplasma penetrans (strain HF-2) (Mycoplasma penetrans).